The following is a 485-amino-acid chain: ATP-dependent rRNA helicase RRP3 (485 aa).

Basic residues predominate over residues 1 to 10 (MPVLKKRKLA). The segment at 1–55 (MPVLKKRKLAHTAQPDPIVSDLESSSSEASQQSHDEQLTAANEQDDESPQVQREE) is disordered. The segment covering 20–32 (SDLESSSSEASQQ) has biased composition (low complexity). A Q motif motif is present at residues 59–87 (KSFKDLGIIDSLCEACEALGYKSPTPIQA). In terms of domain architecture, Helicase ATP-binding spans 90–261 (IPLALQGRDL…RASLSNPLRV (172 aa)). 103-110 (AETGSGKT) lines the ATP pocket. A DEAD box motif is present at residues 209–212 (DEAD). The 149-residue stretch at 285–433 (YKDIYLVYLL…EYKVEKEEVM (149 aa)) folds into the Helicase C-terminal domain. Basic and acidic residues predominate over residues 449–458 (EMKDLHEKRG). Residues 449 to 485 (EMKDLHEKRGSRGATLKGRRPAKGAKRGRDEMDREEG) form a disordered region. Residues 465–474 (KGRRPAKGAK) show a composition bias toward basic residues. Basic and acidic residues predominate over residues 475–485 (RGRDEMDREEG).

Belongs to the DEAD box helicase family. DDX47/RRP3 subfamily. As to quaternary structure, interacts with the SSU processome.

The protein localises to the nucleus. The catalysed reaction is ATP + H2O = ADP + phosphate + H(+). Functionally, ATP-dependent rRNA helicase required for pre-ribosomal RNA processing. Involved in the maturation of the 35S-pre-rRNA and to its cleavage to mature 18S rRNA. In Ajellomyces capsulatus (strain NAm1 / WU24) (Darling's disease fungus), this protein is ATP-dependent rRNA helicase RRP3.